We begin with the raw amino-acid sequence, 161 residues long: Nucleotide-binding protein lpg1167 (161 aa).

Belongs to the YajQ family.

Functionally, nucleotide-binding protein. The chain is Nucleotide-binding protein lpg1167 from Legionella pneumophila subsp. pneumophila (strain Philadelphia 1 / ATCC 33152 / DSM 7513).